Consider the following 170-residue polypeptide: Histone H1.9 (170 aa).

Residues 34-108 (RKPTMSYVIL…GASGSLCLCK (75 aa)) form the H15 domain. S56 is modified (phosphoserine). The disordered stretch occupies residues 118–140 (AKRCQDRQKSQKPQKPGQRESEP).

The protein belongs to the histone H1/H5 family. As to expression, expressed exclusively in the testis by haploid germ cells (at protein level).

The protein resides in the nucleus. It localises to the chromosome. DNA-binding protein that may be implicated in chromatin remodeling and/or transcriptional regulation during spermiogenesis, the process of spermatid maturation into spermatozoa. This Mus musculus (Mouse) protein is Histone H1.9.